Consider the following 119-residue polypeptide: Large ribosomal subunit protein uL22 (119 aa).

This sequence belongs to the universal ribosomal protein uL22 family. In terms of assembly, part of the 50S ribosomal subunit.

This protein binds specifically to 23S rRNA; its binding is stimulated by other ribosomal proteins, e.g. L4, L17, and L20. It is important during the early stages of 50S assembly. It makes multiple contacts with different domains of the 23S rRNA in the assembled 50S subunit and ribosome. Its function is as follows. The globular domain of the protein is located near the polypeptide exit tunnel on the outside of the subunit, while an extended beta-hairpin is found that lines the wall of the exit tunnel in the center of the 70S ribosome. This is Large ribosomal subunit protein uL22 from Chlorobaculum tepidum (strain ATCC 49652 / DSM 12025 / NBRC 103806 / TLS) (Chlorobium tepidum).